The primary structure comprises 84 residues: UPF0248 protein Pisl_1919 (84 aa).

It belongs to the UPF0248 family.

The chain is UPF0248 protein Pisl_1919 from Pyrobaculum islandicum (strain DSM 4184 / JCM 9189 / GEO3).